We begin with the raw amino-acid sequence, 329 residues long: Mas-related G-protein coupled receptor member X2 (329 aa).

At 1–33 (MDPTTPAWGTESTTMNGNDQALPLFCGKETLIS) the chain is on the extracellular side. A helical transmembrane segment spans residues 34-54 (VFLILFIALVGLVGNGFVLWL). At 55–63 (LGFRMRKNA) the chain is on the cytoplasmic side. A helical membrane pass occupies residues 64 to 84 (FSVYVLSLAGADFLFLCFQII). At 85–96 (NCLVYLSNVFCS) the chain is on the extracellular side. Residues 97–117 (ISINFPSFFITVMTCAYLAGL) traverse the membrane as a helical segment. Residues 118–144 (SMLSTISTERCLSVLWPIWYRCRRPRH) are Cytoplasmic-facing. A helical membrane pass occupies residues 145–165 (LSAVACVLLWALSLLLSILEG). Over 166–183 (KFCGLFGDGDSGWCQTFD) the chain is Extracellular. The helical transmembrane segment at 184–204 (LITAAWLIFLFMVLCGSSLAL) threads the bilayer. At 205 to 227 (LVRILCGSRGLPLTRLYLTILLT) the chain is on the cytoplasmic side. Residues 228-248 (VLVFLLCGLPFGIQWFLILWI) form a helical membrane-spanning segment. The Extracellular segment spans residues 249–263 (WKNSDVLFCHIHPVS). The chain crosses the membrane as a helical span at residues 264-284 (VVLSSLNSSANPIIYFFVGSF). Residues 285 to 329 (RKQWRLQQPILKLALQRALQDIAEVDHSEGCFRQGTPEMSRSSLV) lie on the Cytoplasmic side of the membrane.

Belongs to the G-protein coupled receptor 1 family. Mas subfamily.

The protein resides in the cell membrane. Functionally, mast cell-specific receptor for basic secretagogues, i.e. cationic amphiphilic drugs, as well as endo- or exogenous peptides, consisting of a basic head group and a hydrophobic core. Recognizes and binds small molecules containing a cyclized tetrahydroisoquinoline (THIQ), such as non-steroidal neuromuscular blocking drugs (NMBDs), including tubocurarine and atracurium. In response to these compounds, mediates pseudo-allergic reactions characterized by histamine release, inflammation and airway contraction. In Pan troglodytes (Chimpanzee), this protein is Mas-related G-protein coupled receptor member X2 (MRGPRX2).